The primary structure comprises 521 residues: Importin subunit alpha-4 (521 aa).

The segment at 1–29 (MAENPSLENHRIKSFKNKGRDVETMRRHR) is disordered. Alanine 2 carries the post-translational modification N-acetylalanine. Positions 2–58 (AENPSLENHRIKSFKNKGRDVETMRRHRNEVTVELRKNKRDEHLLKKRNVPQEESLE) constitute an IBB domain. Over residues 18 to 29 (KGRDVETMRRHR) the composition is skewed to basic and acidic residues. The short motif at 43–52 (EHLLKKRNVP) is the Nuclear localization signal element. A phosphoserine mark is found at serine 56 and serine 60. An ARM 1; truncated repeat occupies 66-106 (FKAQNVTLEAILQNATSDNPVVQLSAVQAARKLLSSDRNPP). 8 ARM repeats span residues 107-149 (IDDL…TSAQ), 150-194 (TQAV…CRDY), 195-233 (VISLGVVKPLLSFISPSIPITFLRNVTWVIVNLCRNKDP), 234-278 (PPPM…EQIQ), 279-318 (MVIDSGVVPFLVPLLSHQEVKVQTAALRAVGNIVTGTDEQ), 319-360 (TQVV…NQQQ), 361-400 (VQAVIDAGLIPMIIHQLAKGDFGTQKEAAWAISNLTISGR), and 401-443 (KDQV…IMAG). The segment at 137 to 229 (WALTNIASGT…VTWVIVNLCR (93 aa)) is NLS binding site (major). Residues 306–394 (RAVGNIVTGT…QKEAAWAISN (89 aa)) are NLS binding site (minor). One copy of the ARM 10; atypical repeat lies at 447–485 (STIAEIIEECGGLEKIEVLQQHENEDIYKLAFEIIDQYF). Phosphotyrosine is present on tyrosine 484.

Belongs to the importin alpha family. In terms of assembly, forms a complex with importin subunit beta-1. Interacts with DDX21. Interacts with NCBP1, NCBP2/CBP20 and NCBP3. Interacts with RCC1. Interacts with ZC3H11A. As to quaternary structure, (Microbial infection) Interacts with HIV-1 integrase; this interaction might play a role in nuclear import of HIV pre-integration complex. (Microbial infection) Interacts with influenza virus nucleoprotein; this interaction might play a role in nuclear import of viral genome. Ubiquitous. Highest levels in heart and skeletal muscle.

The protein resides in the cytoplasm. It localises to the nucleus. In terms of biological role, functions in nuclear protein import as an adapter protein for nuclear receptor KPNB1. Binds specifically and directly to substrates containing either a simple or bipartite NLS motif. Docking of the importin/substrate complex to the nuclear pore complex (NPC) is mediated by KPNB1 through binding to nucleoporin FxFG repeats and the complex is subsequently translocated through the pore by an energy requiring, Ran-dependent mechanism. At the nucleoplasmic side of the NPC, Ran binds to importin-beta and the three components separate and importin-alpha and -beta are re-exported from the nucleus to the cytoplasm where GTP hydrolysis releases Ran from importin. The directionality of nuclear import is thought to be conferred by an asymmetric distribution of the GTP- and GDP-bound forms of Ran between the cytoplasm and nucleus. In vitro, mediates the nuclear import of human cytomegalovirus UL84 by recognizing a non-classical NLS. Recognizes NLSs of influenza A virus nucleoprotein probably through ARM repeats 7-9. The polypeptide is Importin subunit alpha-4 (KPNA3) (Homo sapiens (Human)).